The following is a 299-amino-acid chain: N-acetylmuramic acid 6-phosphate etherase (299 aa).

Residues 54 to 217 (TIAQYKKGGR…STITMVGVGK (164 aa)) enclose the SIS domain. The active-site Proton donor is Glu-82. Glu-113 is a catalytic residue.

The protein belongs to the GCKR-like family. MurNAc-6-P etherase subfamily. As to quaternary structure, homodimer.

It carries out the reaction N-acetyl-D-muramate 6-phosphate + H2O = N-acetyl-D-glucosamine 6-phosphate + (R)-lactate. The protein operates within amino-sugar metabolism; N-acetylmuramate degradation. Its function is as follows. Specifically catalyzes the cleavage of the D-lactyl ether substituent of MurNAc 6-phosphate, producing GlcNAc 6-phosphate and D-lactate. This chain is N-acetylmuramic acid 6-phosphate etherase, found in Staphylococcus aureus (strain bovine RF122 / ET3-1).